Reading from the N-terminus, the 87-residue chain is Cell division protein ZapA (87 aa).

Positions 64–87 (VHDYIKLKEEYDRLLQKLHKEKDE) form a coiled coil.

Belongs to the ZapA family. Type 2 subfamily. Homodimer. Interacts with FtsZ.

Its subcellular location is the cytoplasm. Functionally, activator of cell division through the inhibition of FtsZ GTPase activity, therefore promoting FtsZ assembly into bundles of protofilaments necessary for the formation of the division Z ring. It is recruited early at mid-cell but it is not essential for cell division. The sequence is that of Cell division protein ZapA from Geobacillus sp. (strain WCH70).